The primary structure comprises 298 residues: Leucine-rich repeat-containing protein 55 (298 aa).

Positions 1–34 (MGDTWAQLPWPGPPHSALLLVFFLLAAGVMHSDA) are cleaved as a signal peptide. The LRRNT domain occupies 35 to 65 (GASCPVLCTCRNQVVDCSNQRLFSVPPDLPM). 2 disulfide bridges follow: Cys38-Cys44 and Cys42-Cys51. LRR repeat units follow at residues 66 to 87 (DTRN…YLTC), 90 to 111 (ELRV…LFLH), 114 to 135 (RLAH…MFRE), 138 to 160 (GLVH…AFQG), and 163 to 186 (HLRD…EGLP). Positions 196–251 (NPWVCGCTMEPLLKWLRNRIQRCTADSQLAECRGPPEVEGAPLFSLTEESFKACHL) constitute an LRRCT domain. 2 disulfides stabilise this stretch: Cys200/Cys227 and Cys202/Cys249. A helical transmembrane segment spans residues 259–279 (LFIAFVGFVVSIASVATNFLL).

As to quaternary structure, interacts with KCNMA1.

The protein resides in the cell membrane. Functionally, auxiliary protein of the large-conductance, voltage and calcium-activated potassium channel (BK alpha). Modulates gating properties by producing a marked shift in the BK channel's voltage dependence of activation in the hyperpolarizing direction, and in the absence of calcium. This chain is Leucine-rich repeat-containing protein 55 (Lrrc55), found in Rattus norvegicus (Rat).